Here is a 337-residue protein sequence, read N- to C-terminus: Fructose-1,6-bisphosphatase class 1 (337 aa).

Residues Glu-94, Asp-116, Leu-118, and Asp-119 each coordinate Mg(2+). Substrate is bound by residues 119 to 122 (DGSS), Asn-210, and Lys-276. Position 282 (Glu-282) interacts with Mg(2+).

Belongs to the FBPase class 1 family. Homotetramer. The cofactor is Mg(2+).

The protein localises to the cytoplasm. It carries out the reaction beta-D-fructose 1,6-bisphosphate + H2O = beta-D-fructose 6-phosphate + phosphate. Its pathway is carbohydrate biosynthesis; gluconeogenesis. The sequence is that of Fructose-1,6-bisphosphatase class 1 from Burkholderia multivorans (strain ATCC 17616 / 249).